Here is a 447-residue protein sequence, read N- to C-terminus: MATNEEFIRTQIFGTVFEITNRYSDLNPVGMGAFGLVCSATDTLTNQQVAIKKIMKPFATAVLAKRTYRELKLLKHLRHENLICLQDIFLSPLEDIYFVTELQGTDLHRLLQTRPLEKQFVQYFHYQILRGLKYVHSAGVVHRDLKPSNILINENCDLKICDFGLARIQDPQMTGYVSTRYYRAPEIMLTWQKYDVEVDIWSAGCIFAEMIEGKPLFPGKDHVHQFSIITDLLGSPPSDVIDTICSENTLKFVTSLPHRDPIPFSERFKTVEPDAVDLLEKMLVFDPKKRITAADALAHPYLAPYHDPTDEPVAEAKFDWHFNDADLPVDTWRVMMYSEILDFHKIGGTDGQIDTSATFDDQVAAATVAAAQAQAHALAQAQMSQNMIDPNQLLNEDGTPVSGSIAENSSNSATTNLNGAAAGMNSASDTINEYANQAVHFANEFQQ.

A Protein kinase domain is found at 23–302 (YSDLNPVGMG…AADALAHPYL (280 aa)). ATP contacts are provided by residues 29 to 37 (VGMGAFGLV) and K52. Catalysis depends on D144, which acts as the Proton acceptor. At T174 the chain carries Phosphothreonine. The TXY motif lies at 174-176 (TGY). A Phosphotyrosine modification is found at Y176. The segment at 394–414 (LNEDGTPVSGSIAENSSNSAT) is disordered. Over residues 401-414 (VSGSIAENSSNSAT) the composition is skewed to polar residues.

It belongs to the protein kinase superfamily. Ser/Thr protein kinase family. MAP kinase subfamily. HOG1 sub-subfamily. Mg(2+) serves as cofactor. Dually phosphorylated on Thr-174 and Tyr-176, which activates the enzyme.

Its subcellular location is the cytoplasm. It localises to the nucleus. It carries out the reaction L-seryl-[protein] + ATP = O-phospho-L-seryl-[protein] + ADP + H(+). The catalysed reaction is L-threonyl-[protein] + ATP = O-phospho-L-threonyl-[protein] + ADP + H(+). Activated by tyrosine and threonine phosphorylation. Functionally, proline-directed serine/threonine-protein kinase involved in a signal transduction pathway that is activated by changes in the osmolarity of the extracellular environment. Controls osmotic regulation of transcription of target genes. The protein is Mitogen-activated protein kinase HOG1 (HOG1) of Candida glabrata (strain ATCC 2001 / BCRC 20586 / JCM 3761 / NBRC 0622 / NRRL Y-65 / CBS 138) (Yeast).